The primary structure comprises 502 residues: MEFSVKSGSPEKQRSACVVVGVFEPRRLSPVAEQLDKISDGYISSLLRRGDLEGKPGQMLLLHQVPGVLSERVLLVGCGKERELDERQYKQIINKTITTLNETGSMEAVCFLTELHVKGRDTYWKVRQAVETTKAGLYSFDQFKTNKAEPRRPLRKLVFNVPTRRELTIGEKAIAHGLAVAKGVRVCRDVANMPPNVCNPAYLASQARRLADAFDNITTKVIGEQEMAELGMNSYLAVARGSDNEAMMAIIEYKGHPDAKPIVLVGKGLTFDSGGISIKPAEGMDEMKYDMGGAASVLGTMHALAQLQLPINVIGVLAGCENMPGGNAYRPGDILTSMSGQTIEVLNTDAEGRLVLCDALTYVDRFDPETVIDVATLTGACIIALGHHTTGLLANHNPLAHELLNASEQAGDRAWRLPLFDEYQEQLESPFADMANIGGRPAGTITAAAFLSRFTKKYNWAHLDIAGTAWKSGKEKGSTGRPVPLLTQFLLNRSGVVIEEKE.

Positions 267 and 272 each coordinate Mn(2+). Lysine 279 is a catalytic residue. Mn(2+) is bound by residues aspartate 290, aspartate 349, and glutamate 351. Arginine 353 is an active-site residue.

This sequence belongs to the peptidase M17 family. It depends on Mn(2+) as a cofactor.

It is found in the cytoplasm. The catalysed reaction is Release of an N-terminal amino acid, Xaa-|-Yaa-, in which Xaa is preferably Leu, but may be other amino acids including Pro although not Arg or Lys, and Yaa may be Pro. Amino acid amides and methyl esters are also readily hydrolyzed, but rates on arylamides are exceedingly low.. It catalyses the reaction Release of an N-terminal amino acid, preferentially leucine, but not glutamic or aspartic acids.. In terms of biological role, presumably involved in the processing and regular turnover of intracellular proteins. Catalyzes the removal of unsubstituted N-terminal amino acids from various peptides. This Aeromonas hydrophila subsp. hydrophila (strain ATCC 7966 / DSM 30187 / BCRC 13018 / CCUG 14551 / JCM 1027 / KCTC 2358 / NCIMB 9240 / NCTC 8049) protein is Probable cytosol aminopeptidase.